Here is a 501-residue protein sequence, read N- to C-terminus: Cytochrome P450 3A6 (501 aa).

Cysteine 440 is a heme binding site.

The protein belongs to the cytochrome P450 family. The cofactor is heme.

It is found in the endoplasmic reticulum membrane. It localises to the microsome membrane. It catalyses the reaction an organic molecule + reduced [NADPH--hemoprotein reductase] + O2 = an alcohol + oxidized [NADPH--hemoprotein reductase] + H2O + H(+). Exhibits progesterone 6 beta-hydroxylase activity. In Oryctolagus cuniculus (Rabbit), this protein is Cytochrome P450 3A6 (CYP3A6).